The sequence spans 723 residues: Choline transporter-like protein 4 (723 aa).

The Cytoplasmic portion of the chain corresponds to 1–36 (MGKKKQEEEQNSSEYGAPAQYDPTFNGPIHKRSCTD). The helical transmembrane segment at 37–57 (IICCVLFMLVITGYMVVGILA) threads the bilayer. Over 58 to 245 (WLYGDPRHVL…RIFEDFAKTW (188 aa)) the chain is Extracellular. 4 N-linked (GlcNAc...) asparagine glycosylation sites follow: N71, N202, N211, and N219. Residues 246–266 (QWIVAGLVIAMVVSVLFLLLL) form a helical membrane-spanning segment. Residues 267 to 269 (RFT) are Cytoplasmic-facing. A helical membrane pass occupies residues 270–290 (APVLIWILIFGVLAVGAFGIW). At 291–325 (YCYNDYMSLASSNLTFSNVGFTTNVQVYLQVRDTW) the chain is on the extracellular side. N-linked (GlcNAc...) asparagine glycosylation is present at N303. The chain crosses the membrane as a helical span at residues 326 to 346 (LAFLIILCIVEAVLILALIFL). Topologically, residues 347 to 374 (RTRILIAIALIQETSKALGHMMSTLLYP) are cytoplasmic. The chain crosses the membrane as a helical span at residues 375-395 (VVTFVLLLVCVSYWGITALYL). The Extracellular segment spans residues 396 to 464 (ATSGAPIYKV…RNLFNLQIYN (69 aa)). N-linked (GlcNAc...) asparagine glycans are attached at residues N409, N421, and N430. The helical transmembrane segment at 465–485 (VVAFLWCVNFVIALGHCTLAG) threads the bilayer. The Cytoplasmic portion of the chain corresponds to 486-516 (AFASYYWAFSKPADIPTFPLTQSFMRALRYH). A helical transmembrane segment spans residues 517 to 537 (VGSLAFGALILTLVQIVRIIL). At 538–578 (EYLDHKFKAAQNPCARFLMCCLKCCFWCLEKFIKFINRNAY) the chain is on the extracellular side. A helical membrane pass occupies residues 579–599 (IMIAIYGKNFCVSAKNAFFLL). Over 600 to 615 (MRNIVRVVVLDKVTDL) the chain is Cytoplasmic. The chain crosses the membrane as a helical span at residues 616–636 (LLFFGKLLVVGGIGVLAFFFF). Over 637–655 (SGRIQLPGNTFQTAALNYY) the chain is Extracellular. The chain crosses the membrane as a helical span at residues 656–676 (WMPIITVVFGAYLIAHGFFSV). The Cytoplasmic portion of the chain corresponds to 677 to 723 (YNMGVDTLFLCFLEDLERNDGSAEKPYFMSKNLMKILNKKNKQPKTG).

Belongs to the CTL (choline transporter-like) family.

The protein localises to the membrane. The protein resides in the apical cell membrane. It catalyses the reaction choline(out) + n H(+)(in) = choline(in) + n H(+)(out). The enzyme catalyses thiamine diphosphate(out) = thiamine diphosphate(in). Choline transporter that seems to play a role in the choline-acetylcholine system and is required to the efferent innervation of hair cells in the olivocochlear bundle for the maintenance of physiological function of outer hair cells and the protection of hair cells from acoustic injury. Also described as a thiamine pyrophosphate transporter. In Danio rerio (Zebrafish), this protein is Choline transporter-like protein 4 (slc44a4).